The primary structure comprises 65 residues: Ubiquinol-cytochrome-c reductase complex assembly factor 6 (65 aa).

Residues Met-1 to Arg-9 are Mitochondrial matrix-facing. Residues Tyr-10–Tyr-32 form a helical; Signal-anchor for type II membrane protein membrane-spanning segment. Residues Arg-33–Gln-65 lie on the Mitochondrial intermembrane side of the membrane.

It belongs to the UQCC6 family. As to expression, highly expressed in skeletal and cardiac muscle (at protein level).

It localises to the mitochondrion inner membrane. In terms of biological role, required for the assembly and stability of the mitochondrial ubiquinol-cytochrome c reductase complex (complex III (CIII) or cytochrome b-c1 complex), a multisubunit transmembrane complex that is part of the mitochondrial electron transport chain (ETC) which drives oxidative phosphorylation. Mediates early complex III biogenesis. Participates in regulating the levels of electron transport chain proteins, and therefore energy supply, in response to changes in energy demand. Also required for cytochrome c oxidase complex (complex IV) assembly. This chain is Ubiquinol-cytochrome-c reductase complex assembly factor 6 (uqcc6), found in Danio rerio (Zebrafish).